Consider the following 277-residue polypeptide: Bifunctional protein FolD (277 aa).

NADP(+)-binding positions include 159–161 (GRS), serine 184, and isoleucine 225.

Belongs to the tetrahydrofolate dehydrogenase/cyclohydrolase family. In terms of assembly, homodimer.

It catalyses the reaction (6R)-5,10-methylene-5,6,7,8-tetrahydrofolate + NADP(+) = (6R)-5,10-methenyltetrahydrofolate + NADPH. The catalysed reaction is (6R)-5,10-methenyltetrahydrofolate + H2O = (6R)-10-formyltetrahydrofolate + H(+). It participates in one-carbon metabolism; tetrahydrofolate interconversion. Its function is as follows. Catalyzes the oxidation of 5,10-methylenetetrahydrofolate to 5,10-methenyltetrahydrofolate and then the hydrolysis of 5,10-methenyltetrahydrofolate to 10-formyltetrahydrofolate. This chain is Bifunctional protein FolD, found in Acholeplasma laidlawii (strain PG-8A).